Here is a 216-residue protein sequence, read N- to C-terminus: Probable transaldolase (216 aa).

The Schiff-base intermediate with substrate role is filled by lysine 83.

It belongs to the transaldolase family. Type 3B subfamily.

The protein resides in the cytoplasm. It catalyses the reaction D-sedoheptulose 7-phosphate + D-glyceraldehyde 3-phosphate = D-erythrose 4-phosphate + beta-D-fructose 6-phosphate. The protein operates within carbohydrate degradation; pentose phosphate pathway; D-glyceraldehyde 3-phosphate and beta-D-fructose 6-phosphate from D-ribose 5-phosphate and D-xylulose 5-phosphate (non-oxidative stage): step 2/3. Its function is as follows. Transaldolase is important for the balance of metabolites in the pentose-phosphate pathway. This is Probable transaldolase from Symbiobacterium thermophilum (strain DSM 24528 / JCM 14929 / IAM 14863 / T).